The primary structure comprises 66 residues: Beta-mammal toxin Co1 (66 aa).

Positions 1 to 66 (KEGYLVNHST…VWPLPKKTCN (66 aa)) constitute an LCN-type CS-alpha/beta domain. 4 cysteine pairs are disulfide-bonded: C12/C65, C16/C41, C25/C46, and C29/C48.

In terms of tissue distribution, expressed by the venom gland.

It localises to the secreted. Beta toxins bind voltage-independently at site-4 of sodium channels (Nav) and shift the voltage of activation toward more negative potentials thereby affecting sodium channel activation and promoting spontaneous and repetitive firing. This toxin acts on human Nav1.6/SCN8A voltage-gated sodium channels. In vivo, is lethal to mice 40 minutes after intraperitoneal injection at a dose of 5ug. No activity is observed when injected into crickets or woodlice. The chain is Beta-mammal toxin Co1 from Centruroides ornatus (Scorpion).